Reading from the N-terminus, the 278-residue chain is Protein MGF 505-3R (278 aa).

This sequence belongs to the asfivirus MGF 505 family.

Its function is as follows. Plays a role in virus cell tropism, and may be required for efficient virus replication in macrophages. The chain is Protein MGF 505-3R from African swine fever virus (isolate Tick/Malawi/Lil 20-1/1983) (ASFV).